A 736-amino-acid polypeptide reads, in one-letter code: Oxysterol-binding protein-related protein 9 (736 aa).

At Ala2 the chain carries N-acetylalanine. A PH domain is found at 2-99 (ASIVEGPLSK…WIHALEETIL (98 aa)). Residues 209–368 (LEPVISTMPS…RDDDGEAGSV (160 aa)) form a disordered region. The span at 253–274 (TPTPNSTGSGNSPPSSSLTPPS) shows a compositional bias: low complexity. Phosphoserine occurs at positions 306, 324, 325, 326, and 329. Polar residues-rich tracts occupy residues 314–329 (SSGS…SGNS) and 336–348 (TESL…NGTS). Position 611 is a phosphoserine (Ser611).

It belongs to the OSBP family. As to quaternary structure, heterodimer with OSBPL11. Interacts with OSBPL10.

It localises to the late endosome membrane. Its subcellular location is the golgi apparatus. The protein resides in the trans-Golgi network membrane. The enzyme catalyses a 1,2-diacyl-sn-glycero-3-phospho-(1D-myo-inositol 4-phosphate)(out) + a 1,2-diacyl-sn-glycero-3-phospho-L-serine(in) = a 1,2-diacyl-sn-glycero-3-phospho-(1D-myo-inositol 4-phosphate)(in) + a 1,2-diacyl-sn-glycero-3-phospho-L-serine(out). Interacts with OSBPL11 to function as lipid transfer proteins. Together they form a heterodimer that localizes at the ER-trans-Golgi membrane contact sites, and exchanges phosphatidylserine (1,2-diacyl-sn-glycero-3-phospho-L-serine, PS) for phosphatidylinositol-4-phosphate (1,2-diacyl-sn-glycero-3-phospho-(1D-myo-inositol 4-phosphate), PI(4)P) between the two organelles, a step that is critical for sphingomyelin synthesis in the Golgi complex. In Mus musculus (Mouse), this protein is Oxysterol-binding protein-related protein 9 (Osbpl9).